The chain runs to 109 residues: Large ribosomal subunit protein uL24 (109 aa).

Belongs to the universal ribosomal protein uL24 family. In terms of assembly, part of the 50S ribosomal subunit.

Functionally, one of two assembly initiator proteins, it binds directly to the 5'-end of the 23S rRNA, where it nucleates assembly of the 50S subunit. In terms of biological role, one of the proteins that surrounds the polypeptide exit tunnel on the outside of the subunit. This Ehrlichia ruminantium (strain Gardel) protein is Large ribosomal subunit protein uL24.